The chain runs to 210 residues: MTIKNHNYHMTRFITSAPDIRHLPQDMGIEVAFAGRSNAGKSSALNALTKQKSLARTSKTPGRTQLINLFEVEEGIRLVDLPGYGYAEVPEEMKRKWQKALGEYLQKRECLIGLVVLMDIRHPLKDLDQQMIQWAVAMQVPVMVLLTKADKLASGARKSQLNKVRDALLALNGDIQVEYFSVPKKIGIDKLHQKLDIWFSQKAVQVENHR.

Residues 27–201 enclose the EngB-type G domain; the sequence is MGIEVAFAGR…HQKLDIWFSQ (175 aa). Residues 35–42, 62–66, 80–83, 147–150, and 180–182 each bind GTP; these read GRSNAGKS, GRTQL, DLPG, TKAD, and FSV. Residues serine 42 and threonine 64 each contribute to the Mg(2+) site.

The protein belongs to the TRAFAC class TrmE-Era-EngA-EngB-Septin-like GTPase superfamily. EngB GTPase family. Mg(2+) serves as cofactor.

Functionally, necessary for normal cell division and for the maintenance of normal septation. The sequence is that of Probable GTP-binding protein EngB from Photorhabdus laumondii subsp. laumondii (strain DSM 15139 / CIP 105565 / TT01) (Photorhabdus luminescens subsp. laumondii).